Here is a 498-residue protein sequence, read N- to C-terminus: Hexokinase-1 (498 aa).

Residues 39–492 (AAAQRVVAEL…SGLGAALVAA (454 aa)) form the Hexokinase domain. A hexokinase small subdomain region spans residues 95–233 (TGGEEGSYYA…GLDMRVSALI (139 aa)). ADP contacts are provided by Gly-109, Thr-110, and Asn-111. Residues Thr-199, Lys-200, Asn-234, and Asp-235 each contribute to the D-glucose site. Residues 234-481 (NDTVGTLAAG…ERVVVKLASD (248 aa)) are hexokinase large subdomain. Residue Thr-258 participates in ADP binding. The D-glucose site is built by Asn-261, Glu-290, and Glu-321. Gly-446 lines the ADP pocket.

It belongs to the hexokinase family. As to expression, highly expressed in senescent leaves.

It catalyses the reaction a D-hexose + ATP = a D-hexose 6-phosphate + ADP + H(+). The enzyme catalyses D-fructose + ATP = D-fructose 6-phosphate + ADP + H(+). It carries out the reaction D-glucose + ATP = D-glucose 6-phosphate + ADP + H(+). It participates in carbohydrate metabolism; hexose metabolism. It functions in the pathway carbohydrate degradation; glycolysis; D-glyceraldehyde 3-phosphate and glycerone phosphate from D-glucose: step 1/4. In terms of biological role, fructose and glucose phosphorylating enzyme. Acts as a positive regulator of leaf senescence by mediating glucose accumulation and inducing an increase in reactive oxygen species (ROS). The protein is Hexokinase-1 (HXK1) of Oryza sativa subsp. japonica (Rice).